Reading from the N-terminus, the 414-residue chain is 2,3-diketo-5-methylthiopentyl-1-phosphate enolase (414 aa).

Catalysis depends on Lys-99, which acts as the Proton acceptor. Substrate-binding positions include Lys-148, Lys-174–Glu-177, His-265, Gly-338, and Gly-360–Gly-361. Positions 174, 176, and 177 each coordinate Mg(2+). Lys-174 is modified (N6-carboxylysine).

It belongs to the RuBisCO large chain family. Type IV subfamily. As to quaternary structure, homodimer. Mg(2+) is required as a cofactor.

The catalysed reaction is 5-methylsulfanyl-2,3-dioxopentyl phosphate = 2-hydroxy-5-methylsulfanyl-3-oxopent-1-enyl phosphate. It functions in the pathway amino-acid biosynthesis; L-methionine biosynthesis via salvage pathway; L-methionine from S-methyl-5-thio-alpha-D-ribose 1-phosphate: step 3/6. Catalyzes the enolization of 2,3-diketo-5-methylthiopentyl-1-phosphate (DK-MTP-1-P) into 2-hydroxy-3-keto-5-methylthiopentenyl-1-phosphate (HK-MTPenyl-1-P). This chain is 2,3-diketo-5-methylthiopentyl-1-phosphate enolase, found in Bacillus cytotoxicus (strain DSM 22905 / CIP 110041 / 391-98 / NVH 391-98).